A 319-amino-acid polypeptide reads, in one-letter code: Ester hydrolase C11orf54 homolog (319 aa).

Zn(2+)-binding residues include histidine 270, histidine 272, and histidine 282.

Monomer. Zn(2+) serves as cofactor.

Its subcellular location is the nucleus. It is found in the cytoplasm. In terms of biological role, exhibits ester hydrolase activity on the substrate p-nitrophenyl acetate, in vitro. May regulate DNA damage and repair by regulating HIF1A degradation via chaperone-mediated autophagy (CMA). This Danio rerio (Zebrafish) protein is Ester hydrolase C11orf54 homolog.